The primary structure comprises 112 residues: Large ribosomal subunit protein eL30 (112 aa).

Belongs to the eukaryotic ribosomal protein eL30 family.

The chain is Large ribosomal subunit protein eL30 (rpl30) from Dictyostelium discoideum (Social amoeba).